Here is a 467-residue protein sequence, read N- to C-terminus: Glutamate--tRNA ligase (467 aa).

A 'HIGH' region motif is present at residues 10 to 20; the sequence is PSPTGHLHIGG. Zn(2+) is bound by residues cysteine 99, cysteine 101, cysteine 126, and glutamate 128. Residues 236 to 240 carry the 'KMSKS' region motif; it reads RLSKR. Lysine 239 is an ATP binding site.

It belongs to the class-I aminoacyl-tRNA synthetase family. Glutamate--tRNA ligase type 1 subfamily. As to quaternary structure, monomer. Zn(2+) serves as cofactor.

It is found in the cytoplasm. It catalyses the reaction tRNA(Glu) + L-glutamate + ATP = L-glutamyl-tRNA(Glu) + AMP + diphosphate. Its function is as follows. Catalyzes the attachment of glutamate to tRNA(Glu) in a two-step reaction: glutamate is first activated by ATP to form Glu-AMP and then transferred to the acceptor end of tRNA(Glu). The polypeptide is Glutamate--tRNA ligase (Desulfosudis oleivorans (strain DSM 6200 / JCM 39069 / Hxd3) (Desulfococcus oleovorans)).